The primary structure comprises 164 residues: Lipoprotein signal peptidase (164 aa).

Transmembrane regions (helical) follow at residues 12-32 (WLWLVVVVLIIDLGSKYLILQ), 70-90 (WFFAGIAIGISVILAVMMYRS), and 102-122 (ALIIGGALGNLFDRLWHGFVV). Residues D123 and D141 contribute to the active site. A helical transmembrane segment spans residues 137–157 (FNLADTAICVGAALIVLEGFL).

It belongs to the peptidase A8 family.

It localises to the cell inner membrane. The catalysed reaction is Release of signal peptides from bacterial membrane prolipoproteins. Hydrolyzes -Xaa-Yaa-Zaa-|-(S,diacylglyceryl)Cys-, in which Xaa is hydrophobic (preferably Leu), and Yaa (Ala or Ser) and Zaa (Gly or Ala) have small, neutral side chains.. It functions in the pathway protein modification; lipoprotein biosynthesis (signal peptide cleavage). In terms of biological role, this protein specifically catalyzes the removal of signal peptides from prolipoproteins. The sequence is that of Lipoprotein signal peptidase from Shigella sonnei (strain Ss046).